Reading from the N-terminus, the 1054-residue chain is DIS3-like exonuclease 1 (1054 aa).

Residues 236–309 form the CSD1 domain; sequence AGIKSGRYIQ…PKNEWKGRTV (74 aa). Positions 365–431 constitute a CSD2 domain; sequence ILVTPWDYRI…GEIATILVEN (67 aa). Positions 465–816 constitute an RNB domain; it reads RKDLRKSHLV…VHRLLMAAIS (352 aa). Phosphoserine is present on S989.

Belongs to the RNR ribonuclease family. Component of the RNA exosome complex. The catalytically inactive RNA exosome core (Exo-9) complex is believed to associate with catalytic subunits EXOSC10, and DIS3 or DIS3L in cytoplasmic- and nuclear-specific RNA exosome complex forms. Mg(2+) serves as cofactor.

It is found in the cytoplasm. It carries out the reaction Exonucleolytic cleavage in the 3'- to 5'-direction to yield nucleoside 5'-phosphates.. Catalytic component of the RNA exosome complex which has 3'-&gt;5' exoribonuclease activity and participates in a multitude of cellular RNA processing and degradation events. In the cytoplasm, the RNA exosome complex is involved in general mRNA turnover and specifically degrades inherently unstable mRNAs containing AU-rich elements (AREs) within their 3' untranslated regions, and in RNA surveillance pathways, preventing translation of aberrant mRNAs. It seems to be involved in degradation of histone mRNA. The sequence is that of DIS3-like exonuclease 1 (DIS3L) from Homo sapiens (Human).